The sequence spans 465 residues: COP9 signalosome complex subunit 5 (465 aa).

Positions 74–216 constitute an MPN domain; the sequence is VLLSKLACSK…IGSFRTYQDQ (143 aa). 3 residues coordinate Zn(2+): His-162, His-164, and Asp-175. Positions 162–175 match the JAMM motif motif; it reads HSHPGYDCWLSNID. The interval 364 to 386 is disordered; sequence SSIHTQMNNQNNQQERNSPKRPH.

It belongs to the peptidase M67A family. CSN5 subfamily. As to quaternary structure, component of the COP9 signalosome (CSN) complex.

The protein localises to the cytoplasm. Its subcellular location is the nucleus. In terms of biological role, catalytic Component of the COP9 signalosome (CSN) complex that acts as an regulator of the ubiquitin (Ubl) conjugation pathway by mediating the deneddylation of the cullin subunit of SCF-type E3 ubiquitin-protein ligase complexes. The chain is COP9 signalosome complex subunit 5 (RRI1) from Candida glabrata (strain ATCC 2001 / BCRC 20586 / JCM 3761 / NBRC 0622 / NRRL Y-65 / CBS 138) (Yeast).